The primary structure comprises 111 residues: uncharacterized protein (111 aa).

The interval 43-72 is disordered; that stretch reads NGRAEETEADAPLPEEPSLPDLPDLSDLDS. Low complexity predominate over residues 61 to 72; that stretch reads LPDLPDLSDLDS.

This is an uncharacterized protein from Homo sapiens (Human).